The sequence spans 104 residues: Large ribosomal subunit protein uL15z (104 aa).

The protein belongs to the universal ribosomal protein uL15 family.

This chain is Large ribosomal subunit protein uL15z (RPL27AA), found in Arabidopsis thaliana (Mouse-ear cress).